The following is a 372-amino-acid chain: E3 ubiquitin-protein ligase RNF34 (372 aa).

An FYVE-type zinc finger spans residues 56–107; it reads EGPNIVCKACGLSFSVFRKKHVCCDCKKDFCSVCSVLQENLRRCSTCHLLQE. The SAP 1 domain occupies 115–134; sequence LMRLKVKDLRQYLILRNIPT. Serine 169 carries the post-translational modification Phosphoserine. Residues 194 to 252 form a disordered region; that stretch reads QGELMDGDQTSRSGVPAQVQSEITSANTEDDDDDDDEDDDDEEENAEDQNPGLSKERVR. The segment covering 201–220 has biased composition (polar residues); the sequence is DQTSRSGVPAQVQSEITSAN. Residues 221–240 are compositionally biased toward acidic residues; the sequence is TEDDDDDDDEDDDDEEENAE. Phosphoserine is present on residues serine 254 and serine 256. The SAP 2 domain maps to 264-278; the sequence is VEGMSVRQLKEILAR. Residues 325 to 360 form an RING-type zinc finger; the sequence is CRICMDAVIDCVLLECGHMVTCTKCGKRMSECPICR.

As to quaternary structure, interacts with CASP8 and CASP10. Interacts with p53/TP53; involved in p53/TP53 ubiquitination. Interacts (via RING-type zinc finger) with MDM2; the interaction stabilizes MDM2. Interacts (via RING-type zinc finger) with PPARGC1A. Interacts with NOD1. Autoubiquitinated (in vitro). In terms of processing, proteolytically cleaved by caspases upon induction of apoptosis by TNF.

The protein localises to the cell membrane. Its subcellular location is the endomembrane system. The protein resides in the nucleus. It is found in the nucleus speckle. It localises to the cytoplasm. The protein localises to the cytosol. It catalyses the reaction S-ubiquitinyl-[E2 ubiquitin-conjugating enzyme]-L-cysteine + [acceptor protein]-L-lysine = [E2 ubiquitin-conjugating enzyme]-L-cysteine + N(6)-ubiquitinyl-[acceptor protein]-L-lysine.. It participates in protein modification; protein ubiquitination. E3 ubiquitin-protein ligase that regulates several biological processes through the ubiquitin-mediated proteasomal degradation of various target proteins. Ubiquitinates the caspases CASP8 and CASP10, promoting their proteasomal degradation, to negatively regulate cell death downstream of death domain receptors in the extrinsic pathway of apoptosis. May mediate 'Lys-48'-linked polyubiquitination of RIPK1 and its subsequent proteasomal degradation thereby indirectly regulating the tumor necrosis factor-mediated signaling pathway. Negatively regulates p53/TP53 through its direct ubiquitination and targeting to proteasomal degradation. Indirectly, may also negatively regulate p53/TP53 through ubiquitination and degradation of SFN. Mediates PPARGC1A proteasomal degradation probably through ubiquitination thereby indirectly regulating the metabolism of brown fat cells. Possibly involved in innate immunity, through 'Lys-48'-linked polyubiquitination of NOD1 and its subsequent proteasomal degradation. This is E3 ubiquitin-protein ligase RNF34 (RNF34) from Pongo abelii (Sumatran orangutan).